A 213-amino-acid polypeptide reads, in one-letter code: Putative thymidylate kinase 251L (213 aa).

ATP is bound at residue 21-28; the sequence is GCDKTGKS.

Belongs to the thymidylate kinase family.

The catalysed reaction is dTMP + ATP = dTDP + ADP. The protein operates within pyrimidine metabolism; dTTP biosynthesis. Functionally, catalyzes the conversion of dTMP to dTDP. The protein is Putative thymidylate kinase 251L of Acheta domesticus (House cricket).